The sequence spans 679 residues: UvrABC system protein B (679 aa).

The 384-residue stretch at 31–414 folds into the Helicase ATP-binding domain; that stretch reads ENLTDGLAHQ…ELEKSGSEII (384 aa). 44 to 51 lines the ATP pocket; sequence GVTGSGKT. Positions 97–120 match the Beta-hairpin motif; sequence YYDYYQPEAYVPSSDTFIEKDASI. Positions 436–589 constitute a Helicase C-terminal domain; that stretch reads QVDDLLSEAR…QTKYNEEHGI (154 aa). One can recognise a UVR domain in the interval 639–674; the sequence is QQQIKKLEQQMYKFAQDLEFEKAAAIRDQLHQLREQ.

It belongs to the UvrB family. Forms a heterotetramer with UvrA during the search for lesions. Interacts with UvrC in an incision complex.

It is found in the cytoplasm. In terms of biological role, the UvrABC repair system catalyzes the recognition and processing of DNA lesions. A damage recognition complex composed of 2 UvrA and 2 UvrB subunits scans DNA for abnormalities. Upon binding of the UvrA(2)B(2) complex to a putative damaged site, the DNA wraps around one UvrB monomer. DNA wrap is dependent on ATP binding by UvrB and probably causes local melting of the DNA helix, facilitating insertion of UvrB beta-hairpin between the DNA strands. Then UvrB probes one DNA strand for the presence of a lesion. If a lesion is found the UvrA subunits dissociate and the UvrB-DNA preincision complex is formed. This complex is subsequently bound by UvrC and the second UvrB is released. If no lesion is found, the DNA wraps around the other UvrB subunit that will check the other stand for damage. The polypeptide is UvrABC system protein B (Haemophilus influenzae (strain ATCC 51907 / DSM 11121 / KW20 / Rd)).